The chain runs to 93 residues: Large ribosomal subunit protein uL23 (93 aa).

It belongs to the universal ribosomal protein uL23 family. In terms of assembly, part of the 50S ribosomal subunit. Contacts protein L29, and trigger factor when it is bound to the ribosome.

Its function is as follows. One of the early assembly proteins it binds 23S rRNA. One of the proteins that surrounds the polypeptide exit tunnel on the outside of the ribosome. Forms the main docking site for trigger factor binding to the ribosome. This chain is Large ribosomal subunit protein uL23, found in Campylobacter lari (strain RM2100 / D67 / ATCC BAA-1060).